Consider the following 258-residue polypeptide: Enterotoxin type G (258 aa).

The first 25 residues, 1-25 (MKKLSTVIIILILEIVFHNMNYVNA), serve as a signal peptide directing secretion. A disulfide bond links Cys116 and Cys133.

This sequence belongs to the staphylococcal/streptococcal toxin family.

It is found in the secreted. Its function is as follows. Staphylococcal enterotoxins cause the intoxication staphylococcal food poisoning syndrome. The illness is characterized by high fever, hypotension, diarrhea, shock, and in some cases death. This Staphylococcus aureus (strain N315) protein is Enterotoxin type G (entG).